A 367-amino-acid chain; its full sequence is uncharacterized protein (367 aa).

The chain crosses the membrane as a helical span at residues Ile6–Gly26.

It to E.coli YdgA and YihF.

It is found in the membrane. This is an uncharacterized protein from Haemophilus influenzae (strain ATCC 51907 / DSM 11121 / KW20 / Rd).